Reading from the N-terminus, the 252-residue chain is 2-succinyl-6-hydroxy-2,4-cyclohexadiene-1-carboxylate synthase (252 aa).

The protein belongs to the AB hydrolase superfamily. MenH family. As to quaternary structure, monomer.

The enzyme catalyses 5-enolpyruvoyl-6-hydroxy-2-succinyl-cyclohex-3-ene-1-carboxylate = (1R,6R)-6-hydroxy-2-succinyl-cyclohexa-2,4-diene-1-carboxylate + pyruvate. Its pathway is quinol/quinone metabolism; 1,4-dihydroxy-2-naphthoate biosynthesis; 1,4-dihydroxy-2-naphthoate from chorismate: step 3/7. It functions in the pathway quinol/quinone metabolism; menaquinone biosynthesis. Catalyzes a proton abstraction reaction that results in 2,5-elimination of pyruvate from 2-succinyl-5-enolpyruvyl-6-hydroxy-3-cyclohexene-1-carboxylate (SEPHCHC) and the formation of 2-succinyl-6-hydroxy-2,4-cyclohexadiene-1-carboxylate (SHCHC). This is 2-succinyl-6-hydroxy-2,4-cyclohexadiene-1-carboxylate synthase from Salmonella choleraesuis (strain SC-B67).